The chain runs to 330 residues: Methionyl-tRNA formyltransferase (330 aa).

(6S)-5,6,7,8-tetrahydrofolate is bound at residue 112-115 (SLLP).

Belongs to the Fmt family.

It carries out the reaction L-methionyl-tRNA(fMet) + (6R)-10-formyltetrahydrofolate = N-formyl-L-methionyl-tRNA(fMet) + (6S)-5,6,7,8-tetrahydrofolate + H(+). Functionally, attaches a formyl group to the free amino group of methionyl-tRNA(fMet). The formyl group appears to play a dual role in the initiator identity of N-formylmethionyl-tRNA by promoting its recognition by IF2 and preventing the misappropriation of this tRNA by the elongation apparatus. This Synechocystis sp. (strain ATCC 27184 / PCC 6803 / Kazusa) protein is Methionyl-tRNA formyltransferase.